A 196-amino-acid polypeptide reads, in one-letter code: Cysteine/O-acetylserine efflux protein (196 aa).

Residues 1-21 (MTPTLISAFLTYTLITALTPG) traverse the membrane as a helical segment. Over 22-41 (PNNILALSSVTSHGLRRSLR) the chain is Cytoplasmic. Residues 42 to 62 (VLAGMSVGFIITMLICAALTF) form a helical membrane-spanning segment. At 63–70 (SLVELDSR) the chain is on the periplasmic side. The helical transmembrane segment at 71-91 (FTLVLGWIGAAYILWLAWQIA) threads the bilayer. At 92-114 (KSKPATGTPSVEPVGFWASLGLQ) the chain is on the cytoplasmic side. The chain crosses the membrane as a helical span at residues 115–135 (FVNVKIILYGITALSTFVLPV). The Periplasmic portion of the chain corresponds to 136–139 (TREP). A helical membrane pass occupies residues 140-160 (VWLISVSLLLAAIGALGNLCW). The Cytoplasmic segment spans residues 161–170 (ALAGHLFQRL). The chain crosses the membrane as a helical span at residues 171–191 (FLLYGRQLNWMLAALLVYCAV). Residues 192 to 196 (RIVVE) lie on the Periplasmic side of the membrane.

The protein belongs to the Rht family.

It localises to the cell inner membrane. The enzyme catalyses O-acetyl-L-serine(in) = O-acetyl-L-serine(out). The catalysed reaction is L-cysteine(in) = L-cysteine(out). Functionally, exporter of O-acetylserine (OAS) and cysteine. The sequence is that of Cysteine/O-acetylserine efflux protein (eamB) from Klebsiella pneumoniae subsp. pneumoniae (strain ATCC 700721 / MGH 78578).